Consider the following 469-residue polypeptide: Transcriptional coactivator YAP1 (469 aa).

The segment covering 1–21 has biased composition (pro residues); sequence MEPAQQPPPQPAPQGPAPPSV. A disordered region spans residues 1-47; it reads MEPAQQPPPQPAPQGPAPPSVSPAGTPAAPPAPPAGHQVVHVRGDSE. Ser46 carries the post-translational modification Phosphoserine. Thr48 carries the phosphothreonine modification. Residues 71-85 adopt a coiled-coil conformation; that stretch reads MRLRKLPDSFFKPPE. Lys75 carries the N6-lactoyllysine modification. A disordered region spans residues 76-99; that stretch reads LPDSFFKPPEPKSHSRQASTDAGT. A phosphoserine mark is found at Ser90 and Ser94. Phosphothreonine occurs at positions 95 and 104. The residue at position 112 (Ser112) is a Phosphoserine; by LATS1 and LATS2. Ser113 and Ser116 each carry phosphoserine. The residue at position 136 (Thr136) is a Phosphothreonine; by MAPK8 and MAPK9. Ser146 carries the post-translational modification Phosphoserine; by LATS1 and LATS2. 2 consecutive WW domains span residues 153–186 and 212–245; these read VPLP…DPRK and GPLP…DPRL. Residues 258–290 are disordered; that stretch reads SAPVKQPPPLAPQSPQGGVLGGGSSNQQQQIQL. Phosphoserine occurs at positions 271 and 320. Residues 273 to 469 form a transactivation domain region; it reads QGGVLGGGSS…LDKESFLTWL (197 aa). A coiled-coil region spans residues 280–325; the sequence is GSSNQQQQIQLQQLQMEKERLRLKQQELFRQELALRSQLPSLEQDG. Residue Ser333 is modified to Phosphoserine; by MAPK8 and MAPK9. A compositionally biased stretch (polar residues) spans 345 to 357; it reads TNSSDPFLNSGTY. Positions 345 to 405 are disordered; sequence TNSSDPFLNS…SQSTLPSQQS (61 aa). Phosphoserine is present on residues Ser347, Ser348, and Ser354. A Phosphoserine; by LATS1 and LATS2 modification is found at Ser363. Residues 365 to 375 are compositionally biased toward polar residues; that stretch reads DSGLSMSSYSI. Phosphoserine; by CK1 occurs at positions 366 and 369. Tyr373 is subject to Phosphotyrosine; by ABL1. Thr378 carries the post-translational modification Phosphothreonine; by MAPK8 and MAPK9. Residues 393 to 405 show a composition bias toward polar residues; that stretch reads DTISQSTLPSQQS.

The protein belongs to the YAP1 family. Part of a complex when phosphorylated that contains DSG3, PKP1, YAP1 and YWHAG; the complex is required for localization of DSG3 and YAP1 to the cell membrane in keratinocytes. Binds to the SH3 domain of the YES kinase. Binds to WBP1 and WBP2. Binds, in vitro, through the WW1 domain, to neural isoforms of ENAH that contain the PPSY motif. The phosphorylated form interacts with YWHAB. Interacts (via WW domains) with LATS1 (via PPxY motif 2). Interacts with LATS2. Interacts (via WW domain 1) with ERBB4 (via PPxY motif 2). Interacts with TEAD1, TEAD2, TEAD3 and TEAD4. Interacts with TP73. Interacts with RUNX1. Interacts with HCK. Interacts (via WW domains) with PTPN14 (via PPxY motif 2); this interaction leads to the cytoplasmic sequestration of YAP1 and inhibits its transcriptional coactivator activity. Interacts (when phosphorylated at Ser-112) with SMAD2, SMAD3 and WWTR1. Interacts with PRRG2 (via cytoplasmic domain). Interacts (via WW domains) with PRRG4 (via cytoplasmic domain). Interacts (phosphorylated) with CLDN18; the interaction sequesters YAP1 away from the nucleus and thereby restricts transcription of YAP1 target genes. Interacts with SMAD1. Interacts with AMOT; the interaction facilitates translocation of YAP1 to the cytoplasm and tight junctions. Interacts with AMOTL2, the interaction is required for ubiquitination of AMOTL2 and localization of YAP1 to tight junctions. Phosphorylated by LATS1 and LATS2; leading to cytoplasmic translocation and inactivation. Phosphorylated by ABL1; leading to YAP1 stabilization, enhanced interaction with TP73 and recruitment onto proapoptotic genes; in response to DNA damage. Phosphorylation at Ser-366 and Ser-369 by CK1 is triggered by previous phosphorylation at Ser-363 by LATS proteins and leads to YAP1 ubiquitination by SCF(beta-TRCP) E3 ubiquitin ligase and subsequent degradation. Phosphorylated at Thr-104, Thr-136, Ser-333 and Thr-378 by MAPK8/JNK1 and MAPK9/JNK2, which is required for the regulation of apoptosis by YAP1. Post-translationally, lactylation by AARS1 promotes nuclear localization and stabilization of YAP1, leading to increased Hippo signaling pathway. Delactylated by SIRT1. In terms of processing, ubiquitinated by SCF(beta-TRCP) E3 ubiquitin ligase. As to expression, highly specific to cortical neurons.

The protein localises to the cytoplasm. It is found in the nucleus. Its subcellular location is the cell junction. The protein resides in the tight junction. It localises to the cell membrane. Functionally, transcriptional regulator with dual roles as a coactivator and corepressor. Critical downstream regulatory target in the Hippo signaling pathway, crucial for organ size control and tumor suppression by restricting proliferation and promoting apoptosis. The Hippo signaling pathway core involves a kinase cascade featuring STK3/MST2 and STK4/MST1, along with its regulatory partner SAV1, which phosphorylates and activates LATS1/2 in complex with their regulatory protein, MOB1. This activation leads to the phosphorylation and inactivation of the YAP1 oncoprotein and WWTR1/TAZ. Phosphorylation of YAP1 by LATS1/2 prevents its nuclear translocation, thereby regulating the expression of its target genes. The transcriptional regulation of gene expression requires TEAD transcription factors and modulates cell growth, anchorage-independent growth, and induction of epithelial-mesenchymal transition (EMT). Plays a key role in tissue tension and 3D tissue shape by regulating the cortical actomyosin network, acting via ARHGAP18, a Rho GTPase activating protein that suppresses F-actin polymerization. It also suppresses ciliogenesis by acting as a transcriptional corepressor of TEAD4 target genes AURKA and PLK1. In conjunction with WWTR1, regulates TGFB1-dependent SMAD2 and SMAD3 nuclear accumulation. Synergizes with WBP2 to enhance PGR activity. Its function is as follows. Attenuates p73-mediated cell death signaling in transcriptional repression-induced atypical death (TRIAD) of neurons. The sequence is that of Transcriptional coactivator YAP1 (Yap1) from Rattus norvegicus (Rat).